A 565-amino-acid polypeptide reads, in one-letter code: Phosphatidylinositol 4-kinase gamma 4 (565 aa).

Ubiquitin-like domains follow at residues 32 to 104 (IVIF…LVVR) and 109 to 187 (RAIS…RPAK). The PI3K/PI4K catalytic domain maps to 257-542 (GYLPVMSTEG…AILPGTSEET (286 aa)). The interval 263-269 (STEGSGG) is G-loop. Residues 264 to 270 (TEGSGGV) and lysine 286 contribute to the ATP site. The disordered stretch occupies residues 291 to 311 (EPMAKNNPRGLPLSTDGEGLK). 369–372 (QLFV) serves as a coordination point for ATP. Residues 402–410 (ANADRHAGN) form a catalytic loop region. Residues 425–451 (PIDHGYCLPEKFEDCTFEWLYWPQARE) form an activation loop region. ATP is bound at residue aspartate 427.

This sequence belongs to the PI3/PI4-kinase family. Type II PI4K subfamily. Interacts with FTIP1 and RPN10. In terms of tissue distribution, specifically expressed in the phloem including companion cells.

The protein localises to the nucleus. The protein resides in the endoplasmic reticulum. The catalysed reaction is a 1,2-diacyl-sn-glycero-3-phospho-(1D-myo-inositol) + ATP = a 1,2-diacyl-sn-glycero-3-phospho-(1D-myo-inositol 4-phosphate) + ADP + H(+). In terms of biological role, the phosphorylation of phosphatidylinositol (PI) to PI4P is the first committed step in the generation of phosphatidylinositol 4,5-bisphosphate (PIP2), a precursor of the second messenger inositol 1,4,5-trisphosphate (InsP3). Involved in the control of flowering under long day conditions by promoting degradation of FTIP1. Recruits FTIP1 for degradation by the 26S proteasome in leaves, which affects RFT1 transport to the shoot apical meristem (SAM). The sequence is that of Phosphatidylinositol 4-kinase gamma 4 from Oryza sativa subsp. japonica (Rice).